The chain runs to 117 residues: MSWRGRSTYYWPRPRRYVQPPEMIGPMRPEQFSDEVEPATPEEGEPATQRQDPAAAQEGEDEGASAGQGPKPEAHSQEQGHPQTGCECEDGPDGQEMDPPNPEEVKTPEEGEKQSQC.

Residues 1–117 (MSWRGRSTYY…PEEGEKQSQC (117 aa)) are disordered. Acidic residues-rich tracts occupy residues 32-45 (FSDE…EEGE) and 87-96 (ECEDGPDGQE). Over residues 103 to 117 (EEVKTPEEGEKQSQC) the composition is skewed to basic and acidic residues.

This sequence belongs to the GAGE family. Forms tetramers.

The protein is G antigen 12I (GAGE12I) of Homo sapiens (Human).